A 740-amino-acid chain; its full sequence is MNPPGSLAGLDPNLDEHLSTQILAPSVHSDNPQERIQARRLRIAARLEPRRREALGEYLDGKKESEEDQSKSYKQKEESRLKLAKLLLCGTELVTNIQVAIDIREIHRRVEEEEIKRQRIEKLENEVKTSQDKFDEITSKWEEGKQKRIPQELWEMLNTQQLHCAGLLEDKNKLISELQQELKTKDDQYVKDLKKQSDDICLLLERMEEQVKNVMKTFREELYNIEKAFEVERQELLASNKKKWERALQAHNAKELEYLTNRMKKVEDYEKQLNRQRIWDCEEYNTIKIKLEQDVQILEQQLQQRKAIYQLNQEKLEYNLQVLKKRDEESTVIKSQQKRKINRLHDILNNLRSKYAKQIKQFQEENQSLTLDYKRLVLQFKELQKAMRHFALIDDEKFREIWLMNEEEAKDLIARAFDVDRIIHTHHLGLPWTAPDFWFLKNVGPISQQPQKSATQIVEEMLMHTEEEEAEEAASEPESYLDLPKQVSEKTTKKILMLLCDESGFLIESKLLSLLLPLEQNECYLLRLDAIFSALGIESEDDLYKLVNFFLKYRAHRLSSSLQIKSCSQASMEKASMEETSMGSELELAEQTEMEGAKEESLVEGEKEEEEETPPSPWDIHPNDVLKILEAFVMGLKKPRDSRAPPRVQKNMRNNSKDSEYWQALTTVIPSSKQNLWDALYTALEKYHIVLTQRAKLLLENSSLEQRNTELQALLQQYLNSKINSELQVPPTQVLRVPTK.

A disordered region spans residues 56–75 (GEYLDGKKESEEDQSKSYKQ). The stretch at 101–387 (IDIREIHRRV…LQFKELQKAM (287 aa)) forms a coiled coil. Positions 573-620 (EKASMEETSMGSELELAEQTEMEGAKEESLVEGEKEEEEETPPSPWDI) are disordered. The span at 595-605 (EGAKEESLVEG) shows a compositional bias: basic and acidic residues. The stretch at 691–724 (LTQRAKLLLENSSLEQRNTELQALLQQYLNSKIN) forms a coiled coil.

It belongs to the DRC1 family. In terms of assembly, component of the nexin-dynein regulatory complex (N-DRC). Interacts with CCDC65/DRC2, DRC3, GAS8/DRC4 and TCTE1/DRC5.

It is found in the cytoplasm. It localises to the cytoskeleton. The protein resides in the cilium axoneme. Its subcellular location is the flagellum axoneme. In terms of biological role, component of the nexin-dynein regulatory complex (N-DRC) a key regulator of ciliary/flagellar motility which maintains the alignment and integrity of the distal axoneme and regulates microtubule sliding in motile axonemes. Plays a critical role in the assembly of N-DRC and also stabilizes the assembly of multiple inner dynein arms and radial spokes. Coassembles with CCDC65/DRC2 to form a central scaffold needed for assembly of the N-DRC and its attachment to the outer doublet microtubules. The sequence is that of Dynein regulatory complex protein 1 (DRC1) from Macaca fascicularis (Crab-eating macaque).